The primary structure comprises 278 residues: Probable septum site-determining protein MinC (278 aa).

The segment at 104–167 (RTQQSVDPAP…ASHTPAAPQS (64 aa)) is disordered.

Belongs to the MinC family. Interacts with MinD and FtsZ.

Its function is as follows. Cell division inhibitor that blocks the formation of polar Z ring septums. Rapidly oscillates between the poles of the cell to destabilize FtsZ filaments that have formed before they mature into polar Z rings. Prevents FtsZ polymerization. The polypeptide is Probable septum site-determining protein MinC (Bordetella avium (strain 197N)).